A 185-amino-acid polypeptide reads, in one-letter code: Ribosome-recycling factor (185 aa).

Belongs to the RRF family.

The protein resides in the cytoplasm. Its function is as follows. Responsible for the release of ribosomes from messenger RNA at the termination of protein biosynthesis. May increase the efficiency of translation by recycling ribosomes from one round of translation to another. This is Ribosome-recycling factor from Shewanella loihica (strain ATCC BAA-1088 / PV-4).